A 285-amino-acid polypeptide reads, in one-letter code: NADPH-dependent 7-cyano-7-deazaguanine reductase (285 aa).

A substrate-binding site is contributed by 80–82; that stretch reads VES. Position 82–83 (82–83) interacts with NADPH; it reads SK. The active-site Thioimide intermediate is cysteine 191. Residue aspartate 198 is the Proton donor of the active site. 231 to 232 contacts substrate; that stretch reads HE. 260–261 contacts NADPH; it reads RG.

This sequence belongs to the GTP cyclohydrolase I family. QueF type 2 subfamily. Homodimer.

The protein localises to the cytoplasm. The enzyme catalyses 7-aminomethyl-7-carbaguanine + 2 NADP(+) = 7-cyano-7-deazaguanine + 2 NADPH + 3 H(+). It functions in the pathway tRNA modification; tRNA-queuosine biosynthesis. Its function is as follows. Catalyzes the NADPH-dependent reduction of 7-cyano-7-deazaguanine (preQ0) to 7-aminomethyl-7-deazaguanine (preQ1). This chain is NADPH-dependent 7-cyano-7-deazaguanine reductase, found in Psychrobacter cryohalolentis (strain ATCC BAA-1226 / DSM 17306 / VKM B-2378 / K5).